The chain runs to 124 residues: Membrane magnesium transporter 2 (124 aa).

Methionine 1 is a topological domain (cytoplasmic). A helical transmembrane segment spans residues 2–22; it reads VAWLWKVLVGVGLSALAHAAF. Topologically, residues 23–44 are lumenal; sequence SAAQHRSHTRLAEMKYEPLPTD. The chain crosses the membrane as a helical span at residues 45–65; the sequence is IVLQTLLAFALTCYGVVHTAG. The Cytoplasmic segment spans residues 66–124; sequence DFRDRDATSELKNVTFDTLRNRPSFYVFQHSGSSLLQPSDTTRSSNLNVPSSDDIRLKF.

It belongs to the membrane magnesium transporter (TC 1.A.67) family.

The protein resides in the golgi apparatus membrane. Its subcellular location is the early endosome membrane. Mediates Mg(2+) transport. In Rattus norvegicus (Rat), this protein is Membrane magnesium transporter 2.